A 101-amino-acid chain; its full sequence is Urease subunit beta (101 aa).

The protein belongs to the urease beta subunit family. Heterotrimer of UreA (gamma), UreB (beta) and UreC (alpha) subunits. Three heterotrimers associate to form the active enzyme.

The protein localises to the cytoplasm. The catalysed reaction is urea + 2 H2O + H(+) = hydrogencarbonate + 2 NH4(+). Its pathway is nitrogen metabolism; urea degradation; CO(2) and NH(3) from urea (urease route): step 1/1. The protein is Urease subunit beta of Acaryochloris marina (strain MBIC 11017).